The chain runs to 127 residues: Modulator protein MzrA (127 aa).

Topologically, residues 1 to 9 (MQLPRVTLR) are cytoplasmic. A helical transmembrane segment spans residues 10–32 (QMTWTTSAIVLLGITLLLWSAFR). Over 33–127 (HQESTLAIRA…LLRDTSHRFG (95 aa)) the chain is Periplasmic.

It belongs to the MzrA family. In terms of assembly, interacts with EnvZ.

It localises to the cell inner membrane. Modulates the activity of the EnvZ/OmpR two-component regulatory system, probably by directly modulating EnvZ enzymatic activity and increasing stability of phosphorylated OmpR. This chain is Modulator protein MzrA, found in Escherichia fergusonii (strain ATCC 35469 / DSM 13698 / CCUG 18766 / IAM 14443 / JCM 21226 / LMG 7866 / NBRC 102419 / NCTC 12128 / CDC 0568-73).